Reading from the N-terminus, the 184-residue chain is Putative manganese efflux pump MntP (184 aa).

Transmembrane regions (helical) follow at residues Ser12–Ile32, Ile39–Leu59, Leu63–Leu83, Phe99–Phe119, Val132–Leu152, and Tyr164–Leu184.

It belongs to the MntP (TC 9.B.29) family.

The protein resides in the cell membrane. Its function is as follows. Probably functions as a manganese efflux pump. The protein is Putative manganese efflux pump MntP of Bacillus pumilus (strain SAFR-032).